We begin with the raw amino-acid sequence, 92 residues long: Transcription factor PRE1 (92 aa).

A bHLH domain is found at 4-59 (RRSRQSSSAPRISDNQMIDLVSKLRQILPEIGQRRRSDKASASKVLQETCNYIRNL).

In terms of assembly, interacts with IBH1 and HFR1. In terms of tissue distribution, expressed in roots, leaves, stems and flowers.

The protein localises to the nucleus. Atypical and probable non DNA-binding bHLH transcription factor that integrates multiple signaling pathways to regulate cell elongation and plant development. Binds IBH1, forming a pair of antagonistic bHLH transcription factors that function downstream of BZR1 to mediate brassinosteroid regulation of cell elongation. Regulates light responses by binding and inhibiting the activity of the bHLH transcription factor HFR1, a critical regulator of light signaling and shade avoidance. May have a regulatory role in various aspects of gibberellin-dependent growth and development. This is Transcription factor PRE1 (PRE1) from Arabidopsis thaliana (Mouse-ear cress).